Consider the following 547-residue polypeptide: Chaperonin GroEL (547 aa).

ATP contacts are provided by residues 30 to 33 (TLGP), K51, 87 to 91 (DGTTT), G415, 479 to 481 (NAA), and D495.

This sequence belongs to the chaperonin (HSP60) family. Forms a cylinder of 14 subunits composed of two heptameric rings stacked back-to-back. Interacts with the co-chaperonin GroES.

The protein localises to the cytoplasm. It catalyses the reaction ATP + H2O + a folded polypeptide = ADP + phosphate + an unfolded polypeptide.. Together with its co-chaperonin GroES, plays an essential role in assisting protein folding. The GroEL-GroES system forms a nano-cage that allows encapsulation of the non-native substrate proteins and provides a physical environment optimized to promote and accelerate protein folding. The sequence is that of Chaperonin GroEL from Pseudomonas fluorescens (strain ATCC BAA-477 / NRRL B-23932 / Pf-5).